Consider the following 406-residue polypeptide: MAFRWLSFLLLALPVLALPQTSSKEAQSFGCSTPANIPFNDDKLPDPFLFNDGTPVRSLTDWSCRRQQLASLIQGYEAGTLPPKPPIVTSTFSQNGLTGNLTVTAGFPGNTTTFSSPVTFPNGTVPTEGWPLLIAYSGLSIPIPDGIAVLTYDNSAIGEQNDQTSRGVGQFFDVYGHNATASAMSAWVWGVSRIIDVLEVTPAAHVNTAKIAVTGCSRDGKGALMAGAFEERIALTIPQESGSGGDTCWRLSKFEQDSGDVVQQATEIVQENVWFSTNFDNFVFNISVLPYDHHSLAGLIAPRPMISYENTDFEWLSPLSGFGCMTAAHPIWEAMGVPDNHGFVQVGNHSHCEFPSDLNPTLFAFFDKFLLGKEANTTIFETNEVFNGTVWNPSQWINWTTPTLSH.

A signal peptide spans 1–17 (MAFRWLSFLLLALPVLA). Cys31 and Cys64 are joined by a disulfide. Asn100, Asn110, Asn122, and Asn178 each carry an N-linked (GlcNAc...) asparagine glycan. Residues 215–220 (GCSRDG) carry the GXSYXG catalytic site motif motif. Cystine bridges form between Cys216-Cys352 and Cys248-Cys324. Ser217 (nucleophile) is an active-site residue. The substrate site is built by Lys221, Gln263, and Glu271. A glycan (N-linked (GlcNAc...) asparagine) is linked at Asn285. Residue Trp315 coordinates substrate. Asn348 carries N-linked (GlcNAc...) asparagine glycosylation. Residue His351 is the Proton donor/acceptor of the active site. Residues Asn376, Asn387, and Asn398 are each glycosylated (N-linked (GlcNAc...) asparagine).

Belongs to the carbohydrate esterase 15 (CE15) family.

The protein localises to the secreted. The catalysed reaction is a 4-O-methyl-alpha-D-glucuronosyl ester derivative + H2O = 4-O-methyl-alpha-D-glucuronate derivative + an alcohol + H(+). Functionally, glucuronoyl esterase which may play a significant role in biomass degradation, as it is considered to disconnect hemicellulose from lignin through the hydrolysis of the ester bond between 4-O-methyl-D-glucuronic acid residues of glucuronoxylans and aromatic alcohols of lignin. This is 4-O-methyl-glucuronoyl methylesterase from Phanerochaete carnosa (strain HHB-10118-sp) (White-rot fungus).